A 198-amino-acid chain; its full sequence is MTKVLVLYYSMYGHIETMARAVAEGASKVDGAEVVVKRVPETMPPQLFEKAGGKTQTAPVATPQELADYDAIIFGTPTRFGNMSGQMRTFLDQTGGLWASGALYGKLASVFSSTGTGGGQEQTITSTWTTLAHHGMVIVPIGYAAQELFDVSQVRGGTPYGATTIAGGDGSRQPSQEELSIARYQGEYVAGLAVKLNG.

Residues 4-189 (VLVLYYSMYG…SIARYQGEYV (186 aa)) enclose the Flavodoxin-like domain. FMN-binding positions include 10–15 (SMYGHI) and 78–80 (TRF). Position 12 (tyrosine 12) interacts with NAD(+). Tryptophan 98 is a substrate binding site. Residues 113 to 118 (STGTGG) and histidine 133 contribute to the FMN site.

This sequence belongs to the WrbA family. The cofactor is FMN.

It carries out the reaction a quinone + NADH + H(+) = a quinol + NAD(+). It catalyses the reaction a quinone + NADPH + H(+) = a quinol + NADP(+). In Shigella dysenteriae serotype 1 (strain Sd197), this protein is NAD(P)H dehydrogenase (quinone).